A 692-amino-acid chain; its full sequence is Proprotein convertase subtilisin/kexin type 9 (692 aa).

An N-terminal signal peptide occupies residues M1 to A30. The propeptide occupies Q31–Q152. A Sulfotyrosine modification is found at Y38. S47 is subject to Phosphoserine. The 73-residue stretch at T77–V149 folds into the Inhibitor I9 domain. The region spanning P155–L444 is the Peptidase S8 domain. Active-site charge relay system residues include D186 and H226. 2 cysteine pairs are disulfide-bonded: C223–C255 and C323–C358. The active-site Charge relay system is the S386. The C-terminal domain stretch occupies residues R450–Q692. 3 cysteine pairs are disulfide-bonded: C457-C527, C477-C526, and C486-C509. N533 carries an N-linked (GlcNAc...) asparagine glycan. 6 disulfide bridges follow: C534–C601, C552–C600, C562–C588, C608–C679, C626–C678, and C635–C654. The residue at position 688 (S688) is a Phosphoserine.

This sequence belongs to the peptidase S8 family. Monomer. Can self-associate to form dimers and higher multimers which may have increased LDLR degrading activity. The precursor protein but not the mature protein may form multimers. Interacts with APOB, VLDLR, LRP8/APOER2 and BACE1. The full-length immature form (pro-PCSK9) interacts with SCNN1A, SCNN1B and SCNN1G. The pro-PCSK9 form (via C-terminal domain) interacts with LDLR. Interacts (via the C-terminal domain) with ANXA2 (via repeat Annexin 1); the interaction inhibits the degradation of LDLR. Ca(2+) is required as a cofactor. In terms of processing, cleavage by furin and PCSK5 generates a truncated inactive protein that is unable to induce LDLR degradation. Undergoes autocatalytic cleavage in the endoplasmic reticulum to release the propeptide from the N-terminus and the cleavage of the propeptide is strictly required for its maturation and activation. The cleaved propeptide however remains associated with the catalytic domain through non-covalent interactions, preventing potential substrates from accessing its active site. As a result, it is secreted from cells as a propeptide-containing, enzymatically inactive protein. Post-translationally, phosphorylation protects the propeptide against proteolysis.

It localises to the cytoplasm. The protein localises to the secreted. The protein resides in the endosome. It is found in the lysosome. Its subcellular location is the cell surface. It localises to the endoplasmic reticulum. The protein localises to the golgi apparatus. Its activity is regulated as follows. Its proteolytic activity is autoinhibited by the non-covalent binding of the propeptide to the catalytic domain. Inhibited by EGTA. Its function is as follows. Crucial player in the regulation of plasma cholesterol homeostasis. Binds to low-density lipid receptor family members: low density lipoprotein receptor (LDLR), very low density lipoprotein receptor (VLDLR), apolipoprotein E receptor (LRP1/APOER) and apolipoprotein receptor 2 (LRP8/APOER2), and promotes their degradation in intracellular acidic compartments. Acts via a non-proteolytic mechanism to enhance the degradation of the hepatic LDLR through a clathrin LDLRAP1/ARH-mediated pathway. May prevent the recycling of LDLR from endosomes to the cell surface or direct it to lysosomes for degradation. Can induce ubiquitination of LDLR leading to its subsequent degradation. Inhibits intracellular degradation of APOB via the autophagosome/lysosome pathway in a LDLR-independent manner. Involved in the disposal of non-acetylated intermediates of BACE1 in the early secretory pathway. Inhibits epithelial Na(+) channel (ENaC)-mediated Na(+) absorption by reducing ENaC surface expression primarily by increasing its proteasomal degradation. Regulates neuronal apoptosis via modulation of LRP8/APOER2 levels and related anti-apoptotic signaling pathways. This Macaca mulatta (Rhesus macaque) protein is Proprotein convertase subtilisin/kexin type 9 (PCSK9).